The following is a 150-amino-acid chain: Urease subunit beta (150 aa).

Residues 122–140 show a composition bias toward low complexity; it reads GAVVGDSPAATPGTTGATG. The disordered stretch occupies residues 122 to 150; sequence GAVVGDSPAATPGTTGATGDLPGYLGEGS.

The protein belongs to the urease beta subunit family. As to quaternary structure, heterotrimer of UreA (gamma), UreB (beta) and UreC (alpha) subunits. Three heterotrimers associate to form the active enzyme.

It localises to the cytoplasm. It catalyses the reaction urea + 2 H2O + H(+) = hydrogencarbonate + 2 NH4(+). Its pathway is nitrogen metabolism; urea degradation; CO(2) and NH(3) from urea (urease route): step 1/1. This is Urease subunit beta from Frankia alni (strain DSM 45986 / CECT 9034 / ACN14a).